The sequence spans 92 residues: C-C motif chemokine 4 (92 aa).

An N-terminal signal peptide occupies residues 1–23; the sequence is MKLCVTVLSLLVLVAAFCSPALS. 2 disulfides stabilise this stretch: C34–C58 and C35–C74.

The protein belongs to the intercrine beta (chemokine CC) family. Homodimer. Interacts with CCR5.

It localises to the secreted. In terms of biological role, monokine with inflammatory and chemokinetic properties. This is C-C motif chemokine 4 (CCL4) from Canis lupus familiaris (Dog).